A 235-amino-acid chain; its full sequence is Uridylate kinase (235 aa).

8–11 (KLSG) contributes to the ATP binding site. Gly49 is a binding site for UMP. ATP is bound by residues Gly50 and Arg54. Residue 131-138 (TGNPYFST) participates in UMP binding. The ATP site is built by Asn159, Tyr165, and Asp168.

The protein belongs to the UMP kinase family. As to quaternary structure, homohexamer.

It is found in the cytoplasm. The enzyme catalyses UMP + ATP = UDP + ADP. Its pathway is pyrimidine metabolism; CTP biosynthesis via de novo pathway; UDP from UMP (UMPK route): step 1/1. With respect to regulation, inhibited by UTP. Its function is as follows. Catalyzes the reversible phosphorylation of UMP to UDP. In Mycoplasma pneumoniae (strain ATCC 29342 / M129 / Subtype 1) (Mycoplasmoides pneumoniae), this protein is Uridylate kinase.